The primary structure comprises 130 residues: MSMQDPLADMLTRIRNAQGVGKATVTMPSSKLKVSVAKVLSDEGYINGFSVSESPKQELTVELKYFEGKPVIAELDRVSRPGLRNYAGKSALPTVRGGLGIAIVSTSKGVMTDRAARAAGVGGEVLCTVF.

Belongs to the universal ribosomal protein uS8 family. As to quaternary structure, part of the 30S ribosomal subunit. Contacts proteins S5 and S12.

One of the primary rRNA binding proteins, it binds directly to 16S rRNA central domain where it helps coordinate assembly of the platform of the 30S subunit. The sequence is that of Small ribosomal subunit protein uS8 from Cellvibrio japonicus (strain Ueda107) (Pseudomonas fluorescens subsp. cellulosa).